The following is a 215-amino-acid chain: Putative B3 domain-containing protein Os11g0625400 (215 aa).

A DNA-binding region (TF-B3 1) is located at residues 1-51 (MTVELEKIAGSFFISKGWKTFVHRTGLLSGQYIRFQVLTPSKINVLLFDKK). The disordered stretch occupies residues 92–117 (SHTSNKETSSDSRTESMTDIPSSSDN). Positions 95-107 (SNKETSSDSRTES) are enriched in basic and acidic residues. Residues 108 to 117 (MTDIPSSSDN) are compositionally biased toward polar residues. Positions 123–215 (DIKNYISIIG…PNVKITIDVL (93 aa)) form a DNA-binding region, TF-B3 2.

It is found in the nucleus. The polypeptide is Putative B3 domain-containing protein Os11g0625400 (Oryza sativa subsp. japonica (Rice)).